A 387-amino-acid chain; its full sequence is S-adenosylmethionine synthase (387 aa).

His15 provides a ligand contact to ATP. Asp17 contacts Mg(2+). Residue Glu43 coordinates K(+). L-methionine is bound by residues Glu56 and Gln99. Residues 99 to 109 form a flexible loop region; it reads QSPDIAQGVNN. Residues 166–168, 232–233, Asp241, 247–248, Ala264, and Lys268 each bind ATP; these read DAK, RF, and RK. L-methionine is bound at residue Asp241. An L-methionine-binding site is contributed by Lys272.

Belongs to the AdoMet synthase family. As to quaternary structure, homotetramer; dimer of dimers. The cofactor is Mg(2+). K(+) is required as a cofactor.

It localises to the cytoplasm. It catalyses the reaction L-methionine + ATP + H2O = S-adenosyl-L-methionine + phosphate + diphosphate. It participates in amino-acid biosynthesis; S-adenosyl-L-methionine biosynthesis; S-adenosyl-L-methionine from L-methionine: step 1/1. Catalyzes the formation of S-adenosylmethionine (AdoMet) from methionine and ATP. The overall synthetic reaction is composed of two sequential steps, AdoMet formation and the subsequent tripolyphosphate hydrolysis which occurs prior to release of AdoMet from the enzyme. The polypeptide is S-adenosylmethionine synthase (Methylobacillus flagellatus (strain ATCC 51484 / DSM 6875 / VKM B-1610 / KT)).